Consider the following 394-residue polypeptide: Flavohemoprotein (394 aa).

A Globin domain is found at 1 to 138 (MLTQEHINII…LAQVFIDREG (138 aa)). His85 lines the heme b pocket. Active-site charge relay system residues include Tyr95 and Glu137. Residues 149-394 (GGWRDGRTFV…VFGPHAQLAA (246 aa)) are reductase. The region spanning 152–262 (RDGRTFVVRE…YAPAGDFFYV (111 aa)) is the FAD-binding FR-type domain. FAD is bound by residues Tyr190 and 206-209 (RQYS). NADP(+) is bound at residue 274-279 (GVGATP). 385–388 (VFGP) provides a ligand contact to FAD.

It belongs to the globin family. Two-domain flavohemoproteins subfamily. The protein in the C-terminal section; belongs to the flavoprotein pyridine nucleotide cytochrome reductase family. Requires heme b as cofactor. FAD is required as a cofactor.

The enzyme catalyses 2 nitric oxide + NADPH + 2 O2 = 2 nitrate + NADP(+) + H(+). It carries out the reaction 2 nitric oxide + NADH + 2 O2 = 2 nitrate + NAD(+) + H(+). Its function is as follows. Is involved in NO detoxification in an aerobic process, termed nitric oxide dioxygenase (NOD) reaction that utilizes O(2) and NAD(P)H to convert NO to nitrate, which protects the bacterium from various noxious nitrogen compounds. Therefore, plays a central role in the inducible response to nitrosative stress. In Vibrio cholerae serotype O1 (strain ATCC 39315 / El Tor Inaba N16961), this protein is Flavohemoprotein (hmp).